The chain runs to 156 residues: Transcription antitermination protein NusB (156 aa).

It belongs to the NusB family.

Its function is as follows. Involved in transcription antitermination. Required for transcription of ribosomal RNA (rRNA) genes. Binds specifically to the boxA antiterminator sequence of the ribosomal RNA (rrn) operons. This chain is Transcription antitermination protein NusB, found in Rickettsia bellii (strain OSU 85-389).